Reading from the N-terminus, the 1399-residue chain is DNA-directed RNA polymerase subunit beta' (1399 aa).

Zn(2+)-binding residues include Cys70, Cys72, Cys85, and Cys88. Mg(2+) is bound by residues Asp460, Asp462, and Asp464. Cys814, Cys888, Cys895, and Cys898 together coordinate Zn(2+). The tract at residues 1367 to 1399 (SERKRQRDLGKPQRVSASEAEAALTEALNSSGN) is disordered. Positions 1382-1399 (SASEAEAALTEALNSSGN) are enriched in low complexity.

This sequence belongs to the RNA polymerase beta' chain family. As to quaternary structure, the RNAP catalytic core consists of 2 alpha, 1 beta, 1 beta' and 1 omega subunit. When a sigma factor is associated with the core the holoenzyme is formed, which can initiate transcription. Mg(2+) serves as cofactor. Zn(2+) is required as a cofactor.

The enzyme catalyses RNA(n) + a ribonucleoside 5'-triphosphate = RNA(n+1) + diphosphate. Functionally, DNA-dependent RNA polymerase catalyzes the transcription of DNA into RNA using the four ribonucleoside triphosphates as substrates. This chain is DNA-directed RNA polymerase subunit beta', found in Pseudomonas aeruginosa (strain UCBPP-PA14).